Reading from the N-terminus, the 131-residue chain is MGGKSAVRHQLVLDCPREAASSAPALRPLGAAATSRAAPLAPLPAPSPRWGLGCGRVRYPGPHPRRAVEPAAGPLSAPIIAGGHPAEAAAGSAKQQPRHSREVPRPPVPQHPSGNSRSALQEAKTEQTKTP.

Low complexity predominate over residues 31–40 (AAATSRAAPL). Residues 31–131 (AAATSRAAPL…EAKTEQTKTP (101 aa)) form a disordered region.

This is an uncharacterized protein from Homo sapiens (Human).